Here is a 364-residue protein sequence, read N- to C-terminus: tRNA-specific 2-thiouridylase MnmA 1 (364 aa).

ATP contacts are provided by residues 10–17 (GMSGGVDS) and Met36. The active-site Nucleophile is the Cys106. A disulfide bridge links Cys106 with Cys204. Position 130 (Gly130) interacts with ATP. Positions 154 to 156 (KDQ) are interaction with tRNA. Residue Cys204 is the Cysteine persulfide intermediate of the active site. Positions 310–311 (RY) are interaction with tRNA.

The protein belongs to the MnmA/TRMU family.

It is found in the cytoplasm. The catalysed reaction is S-sulfanyl-L-cysteinyl-[protein] + uridine(34) in tRNA + AH2 + ATP = 2-thiouridine(34) in tRNA + L-cysteinyl-[protein] + A + AMP + diphosphate + H(+). Functionally, catalyzes the 2-thiolation of uridine at the wobble position (U34) of tRNA, leading to the formation of s(2)U34. This is tRNA-specific 2-thiouridylase MnmA 1 from Caldanaerobacter subterraneus subsp. tengcongensis (strain DSM 15242 / JCM 11007 / NBRC 100824 / MB4) (Thermoanaerobacter tengcongensis).